The following is a 404-amino-acid chain: 4-hydroxy-3-methylbut-2-en-1-yl diphosphate synthase (flavodoxin) (404 aa).

Residues C310, C313, C345, and E352 each contribute to the [4Fe-4S] cluster site.

This sequence belongs to the IspG family. [4Fe-4S] cluster is required as a cofactor.

The catalysed reaction is (2E)-4-hydroxy-3-methylbut-2-enyl diphosphate + oxidized [flavodoxin] + H2O + 2 H(+) = 2-C-methyl-D-erythritol 2,4-cyclic diphosphate + reduced [flavodoxin]. It participates in isoprenoid biosynthesis; isopentenyl diphosphate biosynthesis via DXP pathway; isopentenyl diphosphate from 1-deoxy-D-xylulose 5-phosphate: step 5/6. Converts 2C-methyl-D-erythritol 2,4-cyclodiphosphate (ME-2,4cPP) into 1-hydroxy-2-methyl-2-(E)-butenyl 4-diphosphate. The protein is 4-hydroxy-3-methylbut-2-en-1-yl diphosphate synthase (flavodoxin) of Treponema pallidum (strain Nichols).